We begin with the raw amino-acid sequence, 375 residues long: Leucoanthocyanidin dioxygenase 1 (375 aa).

The Fe2OG dioxygenase domain occupies 218-317 (LLLQLKINYY…RLSWVVFCEP (100 aa)). Positions 242, 244, and 298 each coordinate Fe cation. Arg-308 is a binding site for 2-oxoglutarate.

Belongs to the iron/ascorbate-dependent oxidoreductase family. The cofactor is L-ascorbate. Requires Fe(2+) as cofactor.

It carries out the reaction a (2R,3S,4S)-leucoanthocyanidin + 2-oxoglutarate + O2 = a 4-H-anthocyanidin with a 3-hydroxy group + succinate + CO2 + 2 H2O. Its pathway is pigment biosynthesis; anthocyanin biosynthesis. In terms of biological role, involved in anthocyanin and protoanthocyanidin biosynthesis by catalyzing the oxidation of leucoanthocyanidins into anthocyanidins. Is able to synthesize anthocyanin pigments from leucoanthocyanidins in aleurone tissue. Converts dihydroquercetin to quercetin in vitro. The chain is Leucoanthocyanidin dioxygenase 1 from Oryza sativa subsp. indica (Rice).